A 269-amino-acid chain; its full sequence is G-protein coupled receptor homolog C3 (269 aa).

C28 and C107 are disulfide-bonded. 5 consecutive transmembrane segments (helical) span residues 30-50 (IMSV…TLMS), 71-91 (IGIL…SPVS), 123-143 (LMQI…FVYC), 165-185 (IVLM…IVLM), and 200-220 (HLCL…ISLA).

Belongs to the G-protein coupled receptor 1 family.

The protein localises to the host cell membrane. The sequence is that of G-protein coupled receptor homolog C3 from Sus scrofa (Pig).